Reading from the N-terminus, the 556-residue chain is Formate--tetrahydrofolate ligase 1 (556 aa).

65-72 contacts ATP; the sequence is TPAGEGKS.

It belongs to the formate--tetrahydrofolate ligase family.

The catalysed reaction is (6S)-5,6,7,8-tetrahydrofolate + formate + ATP = (6R)-10-formyltetrahydrofolate + ADP + phosphate. It functions in the pathway one-carbon metabolism; tetrahydrofolate interconversion. This is Formate--tetrahydrofolate ligase 1 from Streptococcus pyogenes serotype M18 (strain MGAS8232).